Reading from the N-terminus, the 201-residue chain is Holliday junction branch migration complex subunit RuvA (201 aa).

The domain I stretch occupies residues 1–63 (MIAYIKGTLN…EDAQILFGFQ (63 aa)). The interval 64–142 (NRDEKYLFTK…SVFSITDEQQ (79 aa)) is domain II. The interval 143–149 (KSSVSNV) is flexible linker. The interval 150-201 (NNNEVYSEAMEALKALGYTDKEVKQVLPHLKKDNDALSVDEAIRKALALLAK) is domain III.

Belongs to the RuvA family. As to quaternary structure, homotetramer. Forms an RuvA(8)-RuvB(12)-Holliday junction (HJ) complex. HJ DNA is sandwiched between 2 RuvA tetramers; dsDNA enters through RuvA and exits via RuvB. An RuvB hexamer assembles on each DNA strand where it exits the tetramer. Each RuvB hexamer is contacted by two RuvA subunits (via domain III) on 2 adjacent RuvB subunits; this complex drives branch migration. In the full resolvosome a probable DNA-RuvA(4)-RuvB(12)-RuvC(2) complex forms which resolves the HJ.

It localises to the cytoplasm. Functionally, the RuvA-RuvB-RuvC complex processes Holliday junction (HJ) DNA during genetic recombination and DNA repair, while the RuvA-RuvB complex plays an important role in the rescue of blocked DNA replication forks via replication fork reversal (RFR). RuvA specifically binds to HJ cruciform DNA, conferring on it an open structure. The RuvB hexamer acts as an ATP-dependent pump, pulling dsDNA into and through the RuvAB complex. HJ branch migration allows RuvC to scan DNA until it finds its consensus sequence, where it cleaves and resolves the cruciform DNA. The polypeptide is Holliday junction branch migration complex subunit RuvA (Oceanobacillus iheyensis (strain DSM 14371 / CIP 107618 / JCM 11309 / KCTC 3954 / HTE831)).